The following is a 226-amino-acid chain: Ribose-5-phosphate isomerase A (226 aa).

Substrate contacts are provided by residues 28–31, 83–86, and 97–100; these read TGST, DGAD, and KGGG. Glu106 functions as the Proton acceptor in the catalytic mechanism. Lys124 lines the substrate pocket.

It belongs to the ribose 5-phosphate isomerase family. Homotetramer.

The catalysed reaction is aldehydo-D-ribose 5-phosphate = D-ribulose 5-phosphate. The protein operates within carbohydrate biosynthesis; D-ribose 5-phosphate biosynthesis. Functionally, catalyzes the reversible conversion of ribose-5-phosphate to ribulose 5-phosphate. This Methanocaldococcus jannaschii (strain ATCC 43067 / DSM 2661 / JAL-1 / JCM 10045 / NBRC 100440) (Methanococcus jannaschii) protein is Ribose-5-phosphate isomerase A.